Consider the following 434-residue polypeptide: MRVLVLGSGVIGTASAYYLARQGFEVTVVDRQPAVAMETSFANAGQISPGYASPWAAPGVPLKAIKWLLERHAPLAIKLTGDVDQYLWMAQMLRNCTASRYAVNKERMVRLSEYSRDCLDELRAETGIAYESRSLGTTQLFRTQAQLDAAAKDIAVLEQSGVPYELLDRDGIARVEPALDSVKGILAGALRLPNDQTGDCQLFTTKLADMAIKLGVEFRFGQDIQRLDFAGDRINGVWIDGKLETADRYVLALGSYSPQMLKPLGIKAPVYPLKGYSLTVPITNGDMAPTSTILDETYKVAITRFDNRIRVGGMAEIAGFDLSLNPRRRETLEMIVNDLYPRGGDLSQASFWTGLRPATPDGTPIVGATAFRNLFLNTGHGTLGWTMACGSGRLLADLIARKKPQISAEGLDISRYGNSREVAKHGQSAPVHQQ.

Residue Val3–Tyr17 participates in FAD binding.

This sequence belongs to the DadA oxidoreductase family. It depends on FAD as a cofactor.

It catalyses the reaction a D-alpha-amino acid + A + H2O = a 2-oxocarboxylate + AH2 + NH4(+). Its pathway is amino-acid degradation; D-alanine degradation; NH(3) and pyruvate from D-alanine: step 1/1. Functionally, oxidative deamination of D-amino acids. This chain is D-amino acid dehydrogenase, found in Pseudomonas entomophila (strain L48).